Reading from the N-terminus, the 480-residue chain is MLFRNRFLLLLALAALLAFVSLSLQFFHLIPVSTPKNGMSSKSRKRIMPDPVTEPPVTDPVYEALLYCNIPSVAERSMEGHAPHHFKLVSVHVFIRHGDRYPLYVIPKTKRPEIDCTLVANRKPYHPKLEAFISHMSKGSGASFESPLNSLPLYPNHPLCEMGELTQTGVVQHLQNGQLLRDIYLKKHKLLPNDWSADQLYLETTGKSRTLQSGLALLYGFLPDFDWKKIYFRHQPSALFCSGSCYCPVRNQYLEKEQRRQYLLRLKNSQLEKTYGEMAKIVDVPTKQLRAANPIDSMLCHFCHNVSFPCTRNGCVDMEHFKVIKTHQIEDERERREKKLYFGYSLLGAHPILNQTIGRMQRATEGRKEELFALYSAHDVTLSPVLSALGLSEARFPRFAARLIFELWQDREKPSEHSVRILYNGVDVTFHTSFCQDHHKRSPKPMCPLENLVRFVKRDMFVALGGSGTNYYDACHREGF.

At 1–6 (MLFRNR) the chain is on the cytoplasmic side. The chain crosses the membrane as a helical; Signal-anchor for type II membrane protein span at residues 7-27 (FLLLLALAALLAFVSLSLQFF). Topologically, residues 28-480 (HLIPVSTPKN…YYDACHREGF (453 aa)) are lumenal. His97 (nucleophile) is an active-site residue. N-linked (GlcNAc...) asparagine glycans are attached at residues Asn305 and Asn354. Catalysis depends on Asp379, which acts as the Proton donor.

This sequence belongs to the histidine acid phosphatase family. Interacts with B3GAT3; the interaction increases the 2-phosphoxylose phosphatase activity of PXYLP1 during completion of linkage region formation in a B3GAT3-mediated manner. Widely expressed. Strongly expressed in spleen, fetal liver, moderately in placenta, pancreas, kidney, thymus and colon.

The protein resides in the golgi apparatus membrane. It catalyses the reaction 3-O-[beta-D-GlcA-(1-&gt;3)-beta-D-Gal-(1-&gt;3)-beta-D-Gal-(1-&gt;4)-beta-D-2-O-P-Xyl]-L-seryl-[protein] + H2O = 3-O-(beta-D-GlcA-(1-&gt;3)-beta-D-Gal-(1-&gt;3)-beta-D-Gal-(1-&gt;4)-beta-D-Xyl)-L-seryl-[protein] + phosphate. Its function is as follows. Responsible for the 2-O-dephosphorylation of xylose in the glycosaminoglycan-protein linkage region of proteoglycans thereby regulating the amount of mature glycosaminoglycan (GAG) chains. Sulfated glycosaminoglycans (GAGs), including heparan sulfate and chondroitin sulfate, are synthesized on the so-called common GAG-protein linkage region (GlcUAbeta1-3Galbeta1-3Galbeta1-4Xylbeta1-O-Ser) of core proteins, which is formed by the stepwise addition of monosaccharide residues by the respective specific glycosyltransferases. Xylose 2-O-dephosphorylation during completion of linkage region formation is a prerequisite for the initiation and efficient elongation of the repeating disaccharide region of GAG chains. The sequence is that of 2-phosphoxylose phosphatase 1 from Homo sapiens (Human).